Reading from the N-terminus, the 337-residue chain is Transmembrane protein 120B (337 aa).

Residues 1 to 39 adopt a coiled-coil conformation; it reads MSLERCQSEWTEIEQEYQQLQETHKVYRQKLEELTNLQA. The next 6 helical transmembrane spans lie at 100-122, 130-150, 157-175, 185-205, 268-288, and 300-320; these read GLYL…AKFA, FKLY…FLLN, IFNF…RESI, GWWV…LTWP, FLLP…VTLF, and QVFM…LTTL.

Belongs to the TMEM120 family.

It is found in the nucleus inner membrane. Necessary for efficient adipogenesis. Does not show ion channel activity. The protein is Transmembrane protein 120B (tmem120b) of Danio rerio (Zebrafish).